Reading from the N-terminus, the 337-residue chain is Calcium-binding protein 39-like (337 aa).

This sequence belongs to the Mo25 family. In terms of assembly, component of a trimeric complex composed of STK11/LKB1, STRAD (STRADA or STRADB) and CAB39/MO25 (CAB39/MO25alpha or CAB39L/MO25beta): the complex tethers STK11/LKB1 in the cytoplasm and stimulates its catalytic activity.

In terms of biological role, component of a complex that binds and activates STK11/LKB1. In the complex, required to stabilize the interaction between CAB39/MO25 (CAB39/MO25alpha or CAB39L/MO25beta) and STK11/LKB1. The polypeptide is Calcium-binding protein 39-like (Cab39l) (Mus musculus (Mouse)).